The following is a 430-amino-acid chain: Probable beta-1,3-galactosyl-O-glycosyl-glycoprotein beta-1,6-N-acetylglucosaminyltransferase 7 (430 aa).

Topologically, residues M1 to K8 are cytoplasmic. Residues S9 to L25 form a helical; Signal-anchor for type II membrane protein membrane-spanning segment. Residues R26–R430 lie on the Extracellular side of the membrane. Intrachain disulfides connect C53–C205, C139–C354, C160–C187, and C363–C395. N87 carries an N-linked (GlcNAc...) asparagine glycan. A glycan (N-linked (GlcNAc...) asparagine) is linked at N272.

Belongs to the glycosyltransferase 14 family.

Its subcellular location is the golgi apparatus membrane. The protein operates within protein modification; protein glycosylation. In terms of biological role, probable glycosyltransferase. In Homo sapiens (Human), this protein is Probable beta-1,3-galactosyl-O-glycosyl-glycoprotein beta-1,6-N-acetylglucosaminyltransferase 7.